We begin with the raw amino-acid sequence, 693 residues long: Polyribonucleotide nucleotidyltransferase (693 aa).

Mg(2+)-binding residues include D489 and D495. One can recognise a KH domain in the interval 556 to 615 (PQIHIMNVNPAKIKDVVGRGGSVVKGIVEKTGAQIDTSDSGEVKIFAKDKRSLDLAKSMV). The S1 motif domain maps to 625-693 (GQIYKGKIVK…GRVKLSLVAR (69 aa)).

It belongs to the polyribonucleotide nucleotidyltransferase family. As to quaternary structure, component of the RNA degradosome, which is a multiprotein complex involved in RNA processing and mRNA degradation. It depends on Mg(2+) as a cofactor.

It is found in the cytoplasm. It catalyses the reaction RNA(n+1) + phosphate = RNA(n) + a ribonucleoside 5'-diphosphate. In terms of biological role, involved in mRNA degradation. Catalyzes the phosphorolysis of single-stranded polyribonucleotides processively in the 3'- to 5'-direction. This is Polyribonucleotide nucleotidyltransferase from Francisella philomiragia subsp. philomiragia (strain ATCC 25017 / CCUG 19701 / FSC 153 / O#319-036).